The primary structure comprises 422 residues: Zinc finger and BTB domain-containing protein 42 (422 aa).

A BTB domain is found at 24 to 92; sequence CDCTVLVGDA…MYEGRLDLRS (69 aa). Disordered regions lie at residues 121 to 141, 166 to 188, and 207 to 256; these read KDRS…QPPC, AALP…DQAL, and LQTP…AAKG. Pro residues predominate over residues 243-252; that stretch reads HSPPKPPPVP. 4 consecutive C2H2-type zinc fingers follow at residues 294 to 316, 334 to 356, 362 to 384, and 390 to 413; these read CICP…LSAH, PTCP…ERTH, YTCV…TVVH, and HACR…RKFH.

The protein belongs to the krueppel C2H2-type zinc-finger protein family. ZBTB18 subfamily. In terms of tissue distribution, expressed in skeletal muscle (at protein level).

It is found in the cytoplasm. The protein localises to the nucleus. The protein resides in the nucleoplasm. In terms of biological role, transcriptional repressor. Specifically binds DNA and probably acts by recruiting chromatin remodeling multiprotein complexes. In Homo sapiens (Human), this protein is Zinc finger and BTB domain-containing protein 42 (ZBTB42).